Here is a 2542-residue protein sequence, read N- to C-terminus: Unconventional myosin-IXa (2542 aa).

In terms of domain architecture, Ras-associating spans 14–112 (NEHTLRIYPG…YRFLLREKNL (99 aa)). The Myosin motor domain maps to 146 to 1017 (KDFDDLCSLP…ERQHLQDLLH (872 aa)). Residues 175-195 (IYTYVGSILIAINPFKFLPIY) traverse the membrane as a helical segment. 239–246 (GESGSGKT) is a binding site for ATP. Residue Ser755 is modified to Phosphoserine. Residues 908–919 (QAEPYFVKCIRS) are actin-binding. 5 IQ domains span residues 1021–1041 (LRRI…QQFL), 1043–1072 (LRQA…EKDA), 1075–1104 (MASA…AAVI), 1116–1145 (RHKA…KIIL), and 1139–1168 (QRNK…EKLR). Positions 1022–1163 (RRIVLLQRWF…RARQRCNALK (142 aa)) are neck or regulatory domain. The tract at residues 1164-2505 (EEKLREAKLE…LKNVKNSPQK (1342 aa)) is tail. The span at 1221–1240 (RESSMDFSKESPDKQQERGR) shows a compositional bias: basic and acidic residues. Positions 1221 to 1276 (RESSMDFSKESPDKQQERGRRQSGTDLQEDVIVRQRPKSLEDLHQKKVGRAKRESR) are disordered. At Ser1243 the chain carries Phosphoserine. Phosphothreonine is present on Thr1245. Ser1259 carries the phosphoserine modification. The stretch at 1265–1292 (QKKVGRAKRESRRMRELEQAIFSLELLK) forms a coiled coil. A compositionally biased stretch (basic residues) spans 1266 to 1276 (KKVGRAKRESR). Phosphoserine is present on residues Ser1300 and Ser1318. Residues 1342-1401 (KSKPESLILDEGELKISSPNTFTNPKSQDNALSASSETSSTLAGKGASSDSEHLKNGTAK) form a disordered region. A compositionally biased stretch (polar residues) spans 1358–1371 (SSPNTFTNPKSQDN). Residues 1372–1384 (ALSASSETSSTLA) show a composition bias toward low complexity. A compositionally biased stretch (basic and acidic residues) spans 1391–1401 (DSEHLKNGTAK). A coiled-coil region spans residues 1492-1539 (TVLKKLEKLNIEKEKRQKQLQQQNEKEMMEQIRQQTDILEKERKAFKT). Disordered stretches follow at residues 1650-1675 (RSTE…REGS), 1693-1727 (SGNP…SVDE), 1767-1793 (GKQG…PGPD), and 1806-1841 (QYHP…KRGV). Residues 1665–1675 (HRSDDPSREGS) show a composition bias toward basic and acidic residues. The segment covering 1715–1726 (QQETSQRFSSVD) has biased composition (polar residues). Positions 1821-1833 (CRKEFKENKEPSP) are enriched in basic and acidic residues. Ser1950 is subject to Phosphoserine. 2 Phorbol-ester/DAG-type zinc fingers span residues 2001-2050 (GHIF…TAKC) and 2068-2119 (SRLT…DTDA). The Rho-GAP domain occupies 2065–2253 (VELSRLTSED…LIVVEQMNKY (189 aa)). Phosphoserine is present on residues Ser2293 and Ser2296. Residues 2324-2360 (TDQQQAAMQQEEKVLTEQIENLQKEKEELTFEMLVLE) adopt a coiled-coil conformation. A disordered region spans residues 2361–2443 (PRASDDETLE…NTTSSHGTRK (83 aa)). The span at 2377-2386 (TADSSENLNM) shows a compositional bias: polar residues. Over residues 2420-2438 (SLDSVSSSVSSCLSNTTSS) the composition is skewed to low complexity. At Ser2458 the chain carries Phosphoserine. Residues 2465 to 2530 (TEGPLGQAKS…TVDSDCSSTQ (66 aa)) are disordered.

Belongs to the TRAFAC class myosin-kinesin ATPase superfamily. Myosin family. In terms of processing, phosphorylated by ALPK1 following monosodium urate monohydrate (MSU)-induced inflammation. Expressed in the eye, lung, liver, brain, heart, kidney, skeletal muscle and spleen. No detection was found in liver. In the brain, expressed in the ependymal cells of the third ventricle and the aqueduct.

It is found in the membrane. Its subcellular location is the cytoplasm. The protein resides in the synapse. The protein localises to the cell projection. It localises to the growth cone. Functionally, myosins are actin-based motor molecules with ATPase activity. Unconventional myosins serve in intracellular movements. Regulates Rho by stimulating it's GTPase activity in neurons. Required for the regulation of neurite branching and motor neuron axon guidance. This chain is Unconventional myosin-IXa (Myo9a), found in Mus musculus (Mouse).